The following is a 678-amino-acid chain: uncharacterized protein (678 aa).

Helical transmembrane passes span Leu-14 to Leu-34 and Gly-180 to Phe-200.

This sequence belongs to the mycobacterial PPE family.

It localises to the cell membrane. This is an uncharacterized protein from Mycobacterium tuberculosis (strain ATCC 25618 / H37Rv).